The following is a 422-amino-acid chain: UDP-N-acetylglucosamine 1-carboxyvinyltransferase (422 aa).

Residue 22 to 23 (KN) participates in phosphoenolpyruvate binding. Residue Arg-95 coordinates UDP-N-acetyl-alpha-D-glucosamine. Cys-119 (proton donor) is an active-site residue. Cys-119 carries the 2-(S-cysteinyl)pyruvic acid O-phosphothioketal modification. UDP-N-acetyl-alpha-D-glucosamine is bound by residues 124-128 (RPIDQ), Asp-309, and Val-331.

It belongs to the EPSP synthase family. MurA subfamily.

It is found in the cytoplasm. The catalysed reaction is phosphoenolpyruvate + UDP-N-acetyl-alpha-D-glucosamine = UDP-N-acetyl-3-O-(1-carboxyvinyl)-alpha-D-glucosamine + phosphate. Its pathway is cell wall biogenesis; peptidoglycan biosynthesis. Its function is as follows. Cell wall formation. Adds enolpyruvyl to UDP-N-acetylglucosamine. The chain is UDP-N-acetylglucosamine 1-carboxyvinyltransferase from Anaeromyxobacter dehalogenans (strain 2CP-1 / ATCC BAA-258).